Consider the following 123-residue polypeptide: Putative outer membrane protein CPn_0818/CP_1053/CPj0818/CpB0847 (123 aa).

An N-terminal signal peptide occupies residues 1-30; that stretch reads MKRQKRKQSITLIEMMVVITLIGIIGGALA.

It localises to the cell outer membrane. This Chlamydia pneumoniae (Chlamydophila pneumoniae) protein is Putative outer membrane protein CPn_0818/CP_1053/CPj0818/CpB0847.